Reading from the N-terminus, the 475-residue chain is Bifunctional purple acid phosphatase 26 (475 aa).

Residues methionine 1–arginine 30 form the signal peptide. N-linked (GlcNAc...) asparagine glycosylation is present at asparagine 103. Fe cation contacts are provided by aspartate 162, aspartate 189, and tyrosine 192. Residue aspartate 189 participates in Zn(2+) binding. 2 residues coordinate Zn(2+): asparagine 227 and histidine 312. Asparagine 227 serves as a coordination point for substrate. The active-site Proton donor is histidine 322. Histidine 349 provides a ligand contact to Zn(2+). A substrate-binding site is contributed by histidine 349–histidine 351. Residue histidine 351 coordinates Fe cation. N-linked (GlcNAc...) asparagine glycans are attached at residues asparagine 365 and asparagine 422.

The protein belongs to the metallophosphoesterase superfamily. Purple acid phosphatase family. Homodimer. Requires Fe cation as cofactor. It depends on Zn(2+) as a cofactor. In terms of processing, glycosylated. As to expression, expressed in roots, stems, leaves, flowers and siliques.

It is found in the vacuole. The enzyme catalyses a phosphate monoester + H2O = an alcohol + phosphate. It catalyses the reaction 2 a phenolic donor + H2O2 = 2 a phenolic radical donor + 2 H2O. Its activity is regulated as follows. Activated by Mg(2+), Co(2+), Mn(2+) and Ba(2+). Inhibited by Fe(2+), Cu(2+), Zn(2+), NaF, molybdate, arsenate, vanadate and inorganic phosphate. No effect of tartrate, Asp, Gln, glutathione, Asn, ascorbic acid and phosphite. Metallo-phosphoesterase involved in phosphate metabolism. Acid phosphatase activity with phosphoenolpyruvate, inorganic pyrophosphate, phenyl-phosphate and p-nitrophenyl-phosphate as the most effective substrates. No activity with phytic acid, phosphocholine or bis-p-nitrophenyl-phosphate. Has a peroxidase activity at alkaline pH. The sequence is that of Bifunctional purple acid phosphatase 26 (PAP26) from Arabidopsis thaliana (Mouse-ear cress).